The sequence spans 299 residues: DNA-binding transcriptional repressor CapW (299 aa).

Positions 1–22 are disordered; sequence MTDESKPTDDQPTSKGRQGARW. The segment at 1-95 is winged HTH domain; the sequence is MTDESKPTDD…SFKAVFPSSA (95 aa). The interval 96-207 is WYL domain; the sequence is VERYLDDLLR…LTRIKCCKYV (112 aa). Residues 131–211 form the WYL domain; that stretch reads GRRLNADIVG…KCCKYVGQDR (81 aa). Residues 156–200 form a probable ligand-binding region region; that stretch reads YQSLTDPEGGERMLSPHALVHDGNRWHVRAYCHKRKAFRDFSLTR. The tract at residues 208 to 299 is WCX domain; sequence GQDRDRADED…RDEIKDLIQY (92 aa).

As to quaternary structure, homodimer.

Its function is as follows. Transcriptional regulator of a CBASS antivirus system. CBASS (cyclic oligonucleotide-based antiphage signaling system) provides immunity against bacteriophage. The CD-NTase protein synthesizes cyclic nucleotides in response to infection; these serve as specific second messenger signals. The signals activate a diverse range of effectors, leading to bacterial cell death and thus abortive phage infection. A type III CBASS system, part of a Cap17-CapW-CdnC-Cap7-Cap6-Cap18 locus. Binds specifically to palindromes that overlap the -10 site in the promoter of cdnC, found between the genes for divergently transcribed capW and cdnC (cognate DNA). Probably represses transcription bidirectionally from the promoter. This chain is DNA-binding transcriptional repressor CapW, found in Pseudomonas aeruginosa.